A 173-amino-acid chain; its full sequence is Endoribonuclease YbeY (173 aa).

The Zn(2+) site is built by His-120, His-124, and His-130.

Belongs to the endoribonuclease YbeY family. It depends on Zn(2+) as a cofactor.

Its subcellular location is the cytoplasm. Functionally, single strand-specific metallo-endoribonuclease involved in late-stage 70S ribosome quality control and in maturation of the 3' terminus of the 16S rRNA. The sequence is that of Endoribonuclease YbeY from Kineococcus radiotolerans (strain ATCC BAA-149 / DSM 14245 / SRS30216).